A 359-amino-acid polypeptide reads, in one-letter code: MPSSSGVDSTQELLDAQAHIWNHIFNHINSMTLKWAVQLGIPDIIHKHDKPMTLSQLADAIPINRAKSDALHRIMRILVHSKFFDRVRTLPNEEEAYCLTRASRLLLRDEPLSLTPFALAVLDEDLMGTFHCVPEWFGNECPSPLEFKHEKSIREFAENNQRWSLLFNEGMANDARLVGSILAKESRKVFEGLETMVDVGGGTGMVSKAIVDAFPGMKGIVLDLPYVVSGLKGSGNLRYVGGDMFHSVPPADAVFLKWILHNWSDDECIKILEKCKEAITTSKNMKGGKVIIVDMILGYEKQQDEAVETQLFFDMMMMTTLTGKERTEQEWAKIFFAAGFKTYKIYPLLGLRSLIEVFP.

Aspartate 223 serves as a coordination point for S-adenosyl-L-methionine. Catalysis depends on histidine 261, which acts as the Proton acceptor.

It belongs to the class I-like SAM-binding methyltransferase superfamily. Cation-independent O-methyltransferase family. Expressed in leaves and trichomes, especially in cv. SD and cv. EMX-1, but barely in cv. MC and cv. SW.

It carries out the reaction an 8-hydroxyflavone + S-adenosyl-L-methionine = an 8-methoxyflavone + S-adenosyl-L-homocysteine + H(+). The catalysed reaction is 4',7,8-trihydroxyflavone + S-adenosyl-L-methionine = 4',7-dihydroxy-8-methoxyflavone + S-adenosyl-L-homocysteine + H(+). It catalyses the reaction 7,8-dihydroxyflavone + S-adenosyl-L-methionine = 7-hydroxy-8-methoxyflavone + S-adenosyl-L-homocysteine + H(+). The enzyme catalyses 3',4',7,8-tetrahydroxyflavone + S-adenosyl-L-methionine = 3',4,7-trihydroxy-8-methoxyflavone + S-adenosyl-L-homocysteine + H(+). It functions in the pathway flavonoid metabolism. Its activity is regulated as follows. Strongly inhibited by gardenin B (GARD B). In terms of biological role, cation-independent flavonoid 8-O-methyltransferase involved in the biosynthesis of polymethoxylated flavonoids natural products such as nevadensin and salvigenin, aroma compounds which contribute to the flavor of sweet basil, and exhibit pharmacological activities such as anti-allergic, anti-oxidant, antibacterial, anti-proliferative, and anti-inflammatory effects. Catalyzes S-adenosylmethionine-dependent regioselective 8-O-methylation of flavonoids; mediates likely the conversion of pilosin (PIL) to nevadensin (NEV) and of 8-hydroxysalvigenin (8-OH-SALV) to gardenin B (GARD B). Can also use 3',4',7,8-tetrahydroxyflavone as substrate. Accepts other unnatural O-diphenols including 7,8,4'-trihydroxy-flavone and 7-O-methyl-8-hydroxy-flavone, and, with a lower efficiency, 7,8-dihydroxy-flavone, as substrates. This is Flavonoid 8-O-methyltransferase 1 from Ocimum basilicum (Sweet basil).